We begin with the raw amino-acid sequence, 292 residues long: Protease HtpX (292 aa).

Helical transmembrane passes span 5–25 and 34–54; these read IFLF…VMSV and SGLL…SLLL. Residue histidine 140 coordinates Zn(2+). The active site involves glutamate 141. A Zn(2+)-binding site is contributed by histidine 144. Helical transmembrane passes span 155–175 and 193–213; these read LLQG…GGII and IIVF…AMWF. Glutamate 218 lines the Zn(2+) pocket.

The protein belongs to the peptidase M48B family. Requires Zn(2+) as cofactor.

Its subcellular location is the cell inner membrane. The sequence is that of Protease HtpX from Xanthomonas oryzae pv. oryzae (strain PXO99A).